We begin with the raw amino-acid sequence, 368 residues long: tRNA-specific 2-thiouridylase MnmA (368 aa).

ATP is bound by residues 12–19 and Met-38; that span reads GMSGGVDS. An interaction with target base in tRNA region spans residues 98 to 100; sequence NPD. Cys-103 acts as the Nucleophile in catalysis. A disulfide bridge links Cys-103 with Cys-200. Gly-128 is an ATP binding site. The interaction with tRNA stretch occupies residues 150 to 152; that stretch reads KDQ. Cys-200 functions as the Cysteine persulfide intermediate in the catalytic mechanism. Residues 313-314 are interaction with tRNA; the sequence is RY.

This sequence belongs to the MnmA/TRMU family. In terms of assembly, interacts with TusE.

It is found in the cytoplasm. The catalysed reaction is S-sulfanyl-L-cysteinyl-[protein] + uridine(34) in tRNA + AH2 + ATP = 2-thiouridine(34) in tRNA + L-cysteinyl-[protein] + A + AMP + diphosphate + H(+). In terms of biological role, catalyzes the 2-thiolation of uridine at the wobble position (U34) of tRNA(Lys), tRNA(Glu) and tRNA(Gln), leading to the formation of s(2)U34, the first step of tRNA-mnm(5)s(2)U34 synthesis. Sulfur is provided by IscS, via a sulfur-relay system. Binds ATP and its substrate tRNAs. The protein is tRNA-specific 2-thiouridylase MnmA of Pectobacterium atrosepticum (strain SCRI 1043 / ATCC BAA-672) (Erwinia carotovora subsp. atroseptica).